The primary structure comprises 76 residues: MIYKVFYQETKERSPRRENTQALYLDIDAASELEGRIKARKMVEEHTDYNVEFIELLSDKHLDYEKETGVFELTEF.

Belongs to the RNA polymerase subunit epsilon family. RNAP is composed of a core of 2 alpha, a beta and a beta' subunit. The core is associated with a delta subunit, and at least one of epsilon or omega. When a sigma factor is associated with the core the holoenzyme is formed, which can initiate transcription.

It catalyses the reaction RNA(n) + a ribonucleoside 5'-triphosphate = RNA(n+1) + diphosphate. Its function is as follows. A non-essential component of RNA polymerase (RNAP). The protein is DNA-directed RNA polymerase subunit epsilon of Streptococcus equi subsp. zooepidemicus (strain H70).